We begin with the raw amino-acid sequence, 362 residues long: Aminomethyltransferase (362 aa).

The protein belongs to the GcvT family. As to quaternary structure, the glycine cleavage system is composed of four proteins: P, T, L and H.

It catalyses the reaction N(6)-[(R)-S(8)-aminomethyldihydrolipoyl]-L-lysyl-[protein] + (6S)-5,6,7,8-tetrahydrofolate = N(6)-[(R)-dihydrolipoyl]-L-lysyl-[protein] + (6R)-5,10-methylene-5,6,7,8-tetrahydrofolate + NH4(+). Its function is as follows. The glycine cleavage system catalyzes the degradation of glycine. This Bacillus subtilis (strain 168) protein is Aminomethyltransferase.